The primary structure comprises 55 residues: Large ribosomal subunit protein bL33 (55 aa).

The protein belongs to the bacterial ribosomal protein bL33 family.

The polypeptide is Large ribosomal subunit protein bL33 (Bradyrhizobium diazoefficiens (strain JCM 10833 / BCRC 13528 / IAM 13628 / NBRC 14792 / USDA 110)).